A 56-amino-acid polypeptide reads, in one-letter code: Small ribosomal subunit protein uS14 (56 aa).

Residues cysteine 21, cysteine 24, cysteine 39, and cysteine 42 each contribute to the Zn(2+) site.

This sequence belongs to the universal ribosomal protein uS14 family. As to quaternary structure, component of the small ribosomal subunit. Mature ribosomes consist of a small (40S) and a large (60S) subunit. The 40S subunit contains about 32 different proteins and 1 molecule of RNA (18S). The 60S subunit contains 45 different proteins and 3 molecules of RNA (25S, 5.8S and 5S). Requires Zn(2+) as cofactor.

Its subcellular location is the cytoplasm. In terms of biological role, component of the ribosome, a large ribonucleoprotein complex responsible for the synthesis of proteins in the cell. The small ribosomal subunit (SSU) binds messenger RNAs (mRNAs) and translates the encoded message by selecting cognate aminoacyl-transfer RNA (tRNA) molecules. The large subunit (LSU) contains the ribosomal catalytic site termed the peptidyl transferase center (PTC), which catalyzes the formation of peptide bonds, thereby polymerizing the amino acids delivered by tRNAs into a polypeptide chain. The nascent polypeptides leave the ribosome through a tunnel in the LSU and interact with protein factors that function in enzymatic processing, targeting, and the membrane insertion of nascent chains at the exit of the ribosomal tunnel. This chain is Small ribosomal subunit protein uS14, found in Candida albicans (strain SC5314 / ATCC MYA-2876) (Yeast).